The chain runs to 285 residues: Acetyl-coenzyme A carboxylase carboxyl transferase subunit beta (285 aa).

Positions 33 to 285 constitute a CoA carboxyltransferase N-terminal domain; it reads MWIKCSKCGK…TLGNILRMHS (253 aa). Positions 37, 40, 56, and 59 each coordinate Zn(2+). Residues 37–59 form a C4-type zinc finger; the sequence is CSKCGKILYKSDVDDNFKVCPKC.

This sequence belongs to the AccD/PCCB family. In terms of assembly, acetyl-CoA carboxylase is a heterohexamer composed of biotin carboxyl carrier protein (AccB), biotin carboxylase (AccC) and two subunits each of ACCase subunit alpha (AccA) and ACCase subunit beta (AccD). The cofactor is Zn(2+).

It is found in the cytoplasm. The enzyme catalyses N(6)-carboxybiotinyl-L-lysyl-[protein] + acetyl-CoA = N(6)-biotinyl-L-lysyl-[protein] + malonyl-CoA. It participates in lipid metabolism; malonyl-CoA biosynthesis; malonyl-CoA from acetyl-CoA: step 1/1. Component of the acetyl coenzyme A carboxylase (ACC) complex. Biotin carboxylase (BC) catalyzes the carboxylation of biotin on its carrier protein (BCCP) and then the CO(2) group is transferred by the transcarboxylase to acetyl-CoA to form malonyl-CoA. In Clostridium acetobutylicum (strain ATCC 824 / DSM 792 / JCM 1419 / IAM 19013 / LMG 5710 / NBRC 13948 / NRRL B-527 / VKM B-1787 / 2291 / W), this protein is Acetyl-coenzyme A carboxylase carboxyl transferase subunit beta.